Consider the following 227-residue polypeptide: Large ribosomal subunit protein bL25 (227 aa).

Residues 1 to 22 form a disordered region; that stretch reads MAETKTLAAAARHGTGKGAARS.

The protein belongs to the bacterial ribosomal protein bL25 family. CTC subfamily. Part of the 50S ribosomal subunit; part of the 5S rRNA/L5/L18/L25 subcomplex. Contacts the 5S rRNA. Binds to the 5S rRNA independently of L5 and L18.

In terms of biological role, this is one of the proteins that binds to the 5S RNA in the ribosome where it forms part of the central protuberance. This Methylocella silvestris (strain DSM 15510 / CIP 108128 / LMG 27833 / NCIMB 13906 / BL2) protein is Large ribosomal subunit protein bL25.